Reading from the N-terminus, the 146-residue chain is Large-conductance mechanosensitive channel (146 aa).

2 helical membrane passes run 15-35 and 81-101; these read VSLAIGVVIGGAFSKIVTSLV and GIFINNIIDFLIVAFSIFIII.

It belongs to the MscL family. In terms of assembly, homopentamer.

The protein resides in the cell membrane. In terms of biological role, channel that opens in response to stretch forces in the membrane lipid bilayer. May participate in the regulation of osmotic pressure changes within the cell. This is Large-conductance mechanosensitive channel from Clostridium beijerinckii (strain ATCC 51743 / NCIMB 8052) (Clostridium acetobutylicum).